The following is a 174-amino-acid chain: Translation initiation factor IF-3 (174 aa).

The protein belongs to the IF-3 family. As to quaternary structure, monomer.

The protein localises to the cytoplasm. In terms of biological role, IF-3 binds to the 30S ribosomal subunit and shifts the equilibrium between 70S ribosomes and their 50S and 30S subunits in favor of the free subunits, thus enhancing the availability of 30S subunits on which protein synthesis initiation begins. This chain is Translation initiation factor IF-3, found in Xanthobacter autotrophicus (strain ATCC BAA-1158 / Py2).